The following is a 546-amino-acid chain: High-affinity glucose transporter ght5 (546 aa).

At 1 to 9 (MGKNLTIVM) the chain is on the cytoplasmic side. The chain crosses the membrane as a helical span at residues 10–30 (LVFVSMAGWMFGADTGSIGGI). At 31-58 (TNMRDFQSRFADRYNPVTDSYSYSSARQ) the chain is on the extracellular side. A helical membrane pass occupies residues 59-79 (GLITGMVNVGSFFGCFLSSPL). Residues 80–87 (MDRIGKRT) are Cytoplasmic-facing. The helical transmembrane segment at 88–108 (SIMFWTIVYLIGIILQVTAVP) threads the bilayer. Residues 109–112 (SWVQ) are Extracellular-facing. Residues 113–133 (IMVAKIWTGLSIGALSVLAPG) traverse the membrane as a helical segment. The Cytoplasmic portion of the chain corresponds to 134–144 (FQSEVAPADLR). A helical transmembrane segment spans residues 145 to 165 (GTIVTTYQLAVTGGIFIAACI). Residues 166-179 (NMGTHKLHKTAQWR) are Extracellular-facing. The helical transmembrane segment at 180-200 (VSMGINLLWGIITFIGISFLP) threads the bilayer. Topologically, residues 201–266 (ESPRYLISVG…IFGPDIRYRT (66 aa)) are cytoplasmic. The chain crosses the membrane as a helical span at residues 267–285 (FLGLGVMSLQQLTGDNYYF). The Extracellular segment spans residues 286-301 (YYGFEVFEGTGMNSPY). The helical transmembrane segment at 302–322 (LSALILDAVNFGCTFGGLFVL) threads the bilayer. Topologically, residues 323 to 328 (EFFGRR) are cytoplasmic. The chain crosses the membrane as a helical span at residues 329 to 349 (MPLIIGALWQSITFFIYAAVG). Over 350–363 (NRALTRKNGTSNHR) the chain is Extracellular. Residue Asn357 is glycosylated (N-linked (GlcNAc...) asparagine). A helical membrane pass occupies residues 364–384 (AGAVMIVFSCLFIFSFAQTWG). Topologically, residues 385–404 (PAAYVIVGESYPIRYRSKCA) are cytoplasmic. A helical transmembrane segment spans residues 405–425 (AVATTGNWLWGFLISFFTPFI). The Extracellular segment spans residues 426–432 (TNSIGFK). A helical membrane pass occupies residues 433–453 (YGYIFAACNLCAACIIFLFAH). The Cytoplasmic portion of the chain corresponds to 454 to 546 (ETKGLTLEEI…SYHDQEEQFA (93 aa)). Residues 486-546 (KQQEEVREKS…SYHDQEEQFA (61 aa)) form a disordered region. Positions 487 to 496 (QQEEVREKSR) are enriched in basic and acidic residues. The span at 509–519 (VDGEEGIEDSS) shows a compositional bias: acidic residues. Residues 520–529 (NDISSTTSSD) show a composition bias toward low complexity. Residues Ser528 and Ser537 each carry the phosphoserine modification. Positions 530–546 (GRAKPESSYHDQEEQFA) are enriched in basic and acidic residues.

The protein belongs to the major facilitator superfamily. Sugar transporter (TC 2.A.1.1) family.

The protein localises to the membrane. Functionally, high-affinity glucose transporter. The protein is High-affinity glucose transporter ght5 (ght5) of Schizosaccharomyces pombe (strain 972 / ATCC 24843) (Fission yeast).